Reading from the N-terminus, the 742-residue chain is Ferric enterobactin receptor PirA (742 aa).

Positions 1–28 (MYPQFRRGHLAAAVLFASSSLLGGQALA) are cleaved as a signal peptide. The TBDR plug domain occupies 57-184 (QELKQAPGVS…AGGVVNIITK (128 aa)). 2 disordered regions span residues 91–112 (GVNL…IDIR) and 409–435 (SSLK…PKSK). The segment covering 94–108 (LTGNSSSGQRGNNRQ) has biased composition (polar residues). The 554-residue stretch at 189–742 (RLRGSMTVFT…AYYVSMTTSF (554 aa)) folds into the TBDR beta-barrel domain. Cysteine 516 and cysteine 525 are oxidised to a cystine. A TonB C-terminal box motif is present at residues 725–742 (ATYNEPGRAYYVSMTTSF).

Belongs to the TonB-dependent receptor family.

It is found in the cell outer membrane. Functionally, specific receptor for the siderophore ferric enterobactin. Probably involved in the transport of siderophores, including host catecholamines such as L-DOPA. This Pseudomonas aeruginosa (strain ATCC 15692 / DSM 22644 / CIP 104116 / JCM 14847 / LMG 12228 / 1C / PRS 101 / PAO1) protein is Ferric enterobactin receptor PirA.